Reading from the N-terminus, the 160-residue chain is Small ribosomal subunit protein uS7 (160 aa).

It belongs to the universal ribosomal protein uS7 family. Part of the 30S ribosomal subunit. Contacts proteins S9 and S11.

Its function is as follows. One of the primary rRNA binding proteins, it binds directly to 16S rRNA where it nucleates assembly of the head domain of the 30S subunit. Is located at the subunit interface close to the decoding center, probably blocks exit of the E-site tRNA. The protein is Small ribosomal subunit protein uS7 of Rickettsia canadensis (strain McKiel).